Reading from the N-terminus, the 272-residue chain is Shikimate dehydrogenase (NADP(+)) (272 aa).

Shikimate is bound by residues 20–22 (TMS) and Thr-67. The Proton acceptor role is filled by Lys-71. Glu-83 contributes to the NADP(+) binding site. Shikimate is bound by residues Asn-92 and Asp-107. NADP(+)-binding positions include 129 to 133 (GAGGA), 153 to 158 (NRTKSK), and Leu-216. Residue Tyr-218 coordinates shikimate. Gly-239 lines the NADP(+) pocket.

The protein belongs to the shikimate dehydrogenase family. In terms of assembly, homodimer.

The enzyme catalyses shikimate + NADP(+) = 3-dehydroshikimate + NADPH + H(+). Its pathway is metabolic intermediate biosynthesis; chorismate biosynthesis; chorismate from D-erythrose 4-phosphate and phosphoenolpyruvate: step 4/7. Functionally, involved in the biosynthesis of the chorismate, which leads to the biosynthesis of aromatic amino acids. Catalyzes the reversible NADPH linked reduction of 3-dehydroshikimate (DHSA) to yield shikimate (SA). The polypeptide is Shikimate dehydrogenase (NADP(+)) (Maridesulfovibrio salexigens (strain ATCC 14822 / DSM 2638 / NCIMB 8403 / VKM B-1763) (Desulfovibrio salexigens)).